Consider the following 657-residue polypeptide: Broad substrate specificity ATP-binding cassette transporter ABCG2 (657 aa).

The disordered stretch occupies residues 1–24; it reads MSSSNDHVLVPMSQRNNNGLPRTN. Residues 1–393 are Cytoplasmic-facing; it reads MSSSNDHVLV…SFKNLLGNPQ (393 aa). Residues 13–24 show a composition bias toward polar residues; it reads SQRNNNGLPRTN. Residues 48–285 form the ABC transporter domain; it reads VKSGFLVRKT…FASAGYHCEP (238 aa). ATP contacts are provided by residues 79-86, 183-189, Glu210, and His242; these read GPTGGGKS and RGISGGE. The 265-residue stretch at 389–653 folds into the ABC transmembrane type-2 domain; sequence LGNPQASVAQ…TIAYLKLLFL (265 aa). The chain crosses the membrane as a helical span at residues 394 to 414; that stretch reads ASVAQLIVTVILGLIIGAIYF. Over 415-428 the chain is Extracellular; that stretch reads DLKYDAAGMQNRAG. The helical transmembrane segment at 429–449 threads the bilayer; that stretch reads VLFFLTTNQCFSSVSAVELFV. The Cytoplasmic segment spans residues 450-477; it reads VEKKLFIHEYISGYYRVSSYFFGKVMSD. Residues 478–498 form a helical membrane-spanning segment; sequence LLPMRFLPSVIFTCVLYFMLG. Topologically, residues 499–506 are extracellular; that stretch reads LKKTVDAF. Residues 507–527 form a helical membrane-spanning segment; the sequence is FIMMFTLIMVAYTASSMALAI. Residues 528-535 lie on the Cytoplasmic side of the membrane; that stretch reads ATGQSVVS. A helical transmembrane segment spans residues 536–556; the sequence is VATLLMTIAFVFMMLFSGLLV. Topologically, residues 557 to 632 are extracellular; it reads NLRTIGPWLS…LSPWGLWKNH (76 aa). Cys592 and Cys610 are disulfide-bonded. Asn596 and Asn600 each carry an N-linked (GlcNAc...) asparagine glycan. A helical membrane pass occupies residues 633–653; sequence VALACMIIIFLTIAYLKLLFL. Residues 654–657 are Cytoplasmic-facing; that stretch reads KKYS.

The protein belongs to the ABC transporter superfamily. ABCG family. Eye pigment precursor importer (TC 3.A.1.204) subfamily. Homodimer; disulfide-linked. The minimal functional unit is a homodimer, but the major oligomeric form in plasma membrane is a homotetramer with possibility of higher order oligomerization up to homododecamers. N-glycosylated. Glycosylation-deficient ABCG2 is normally expressed and functional. In terms of processing, phosphorylated. Phosphorylation may regulate the localization to the plasma membrane, the homooligomerization and therefore, the activity of the transporter. As to expression, highly expressed in kidney. Lower expression in liver, colon, heart, spleen, and placenta. Expressed in mammary gland. Expressed in intestinal villi and renal proximal tubules, hepatic bile canalicular membranes, and placental labyrinth cells (at protein level).

The protein localises to the cell membrane. The protein resides in the apical cell membrane. Its subcellular location is the mitochondrion membrane. It catalyses the reaction ATP + H2O + xenobioticSide 1 = ADP + phosphate + xenobioticSide 2.. The catalysed reaction is riboflavin(in) + ATP + H2O = riboflavin(out) + ADP + phosphate + H(+). It carries out the reaction pheophorbide a(in) + ATP + H2O = pheophorbide a(out) + ADP + phosphate + H(+). The enzyme catalyses urate(in) + ATP + H2O = urate(out) + ADP + phosphate + H(+). It catalyses the reaction indoxyl sulfate(in) + ATP + H2O = indoxyl sulfate(out) + ADP + phosphate + H(+). The catalysed reaction is sphing-4-enine 1-phosphate(in) + ATP + H2O = sphing-4-enine 1-phosphate(out) + ADP + phosphate + H(+). It carries out the reaction estrone 3-sulfate(in) + ATP + H2O = estrone 3-sulfate(out) + ADP + phosphate + H(+). The enzyme catalyses dehydroepiandrosterone 3-sulfate(in) + ATP + H2O = dehydroepiandrosterone 3-sulfate(out) + ADP + phosphate + H(+). It catalyses the reaction 4-methylumbelliferone sulfate(in) + ATP + H2O = 4-methylumbelliferone sulfate(out) + ADP + phosphate + H(+). The catalysed reaction is 5,7-dimethyl-2-methylamino-4-(3-pyridylmethyl)-1,3-benzothiazol-6-yl beta-D-glucuronate(in) + ATP + H2O = 5,7-dimethyl-2-methylamino-4-(3-pyridylmethyl)-1,3-benzothiazol-6-yl beta-D-glucuronate(out) + ADP + phosphate + H(+). It carries out the reaction 4-methylumbelliferone beta-D-glucuronate(in) + ATP + H2O = 4-methylumbelliferone beta-D-glucuronate(out) + ADP + phosphate + H(+). The enzyme catalyses 5,7-dimethyl-2-methylamino-4-(3-pyridylmethyl)-1,3-benzothiazol-6-yl sulfate(in) + ATP + H2O = 5,7-dimethyl-2-methylamino-4-(3-pyridylmethyl)-1,3-benzothiazol-6-yl sulfate(out) + ADP + phosphate + H(+). It catalyses the reaction 17beta-estradiol 17-O-(beta-D-glucuronate)(in) + ATP + H2O = 17beta-estradiol 17-O-(beta-D-glucuronate)(out) + ADP + phosphate + H(+). The catalysed reaction is methotrexate(in) + ATP + H2O = methotrexate(out) + ADP + phosphate + H(+). It carries out the reaction itaconate(in) + ATP + H2O = itaconate(out) + ADP + phosphate + H(+). Its activity is regulated as follows. Specifically inhibited by the fungal toxin fumitremorgin C and Ko143. Functionally, broad substrate specificity ATP-dependent transporter of the ATP-binding cassette (ABC) family that actively extrudes a wide variety of physiological compounds, dietary toxins and xenobiotics from cells. Involved in porphyrin homeostasis, mediating the export of protoporphyrin IX (PPIX) from both mitochondria to cytosol and cytosol to extracellular space, it also functions in the cellular export of heme. Also mediates the efflux of sphingosine-1-P from cells. Acts as a urate exporter functioning in both renal and extrarenal urate excretion. In kidney, it also functions as a physiological exporter of the uremic toxin indoxyl sulfate. Also involved in the excretion of steroids like estrone 3-sulfate/E1S, 3beta-sulfooxy-androst-5-en-17-one/DHEAS, and other sulfate conjugates. Mediates the secretion of the riboflavin and biotin vitamins into milk. Extrudes pheophorbide a, a phototoxic porphyrin catabolite of chlorophyll, reducing its bioavailability. Plays an important role in the exclusion of xenobiotics from the brain. It confers to cells a resistance to multiple drugs and other xenobiotics including mitoxantrone, pheophorbide, camptothecin, methotrexate, azidothymidine, and the anthracyclines daunorubicin and doxorubicin, through the control of their efflux. In placenta, it limits the penetration of drugs from the maternal plasma into the fetus. May play a role in early stem cell self-renewal by blocking differentiation. In inflammatory macrophages, exports itaconate from the cytosol to the extracellular compartment and limits the activation of TFEB-dependent lysosome biogenesis involved in antibacterial innate immune response. The sequence is that of Broad substrate specificity ATP-binding cassette transporter ABCG2 (Abcg2) from Mus musculus (Mouse).